A 251-amino-acid polypeptide reads, in one-letter code: MNDKNEESIDFGYQKVARNQKKNLVADVFQSVAAKYDVMNDLMSFGIHRLWKRYTIDCSGVRRGMKVLDIAGGTGDLTAQFSRRVGAEGEVVLADINDAMLKVGRDKLRDRGIIGNVRYVQADAEELPFDDNTFDVITIAFGLRNVTDKDKALRSMLRVLKPGGRVLILEFSKPVSATLNQVYDFYSFNILPKMGQVVANDSDSYQYLAESIRMHPDQETLKSMMEAAGYEKVDYQNMTGGVVALHRGYKF.

S-adenosyl-L-methionine contacts are provided by residues T74, D95, and 123 to 124 (DA).

This sequence belongs to the class I-like SAM-binding methyltransferase superfamily. MenG/UbiE family.

It carries out the reaction a 2-demethylmenaquinol + S-adenosyl-L-methionine = a menaquinol + S-adenosyl-L-homocysteine + H(+). The enzyme catalyses a 2-methoxy-6-(all-trans-polyprenyl)benzene-1,4-diol + S-adenosyl-L-methionine = a 5-methoxy-2-methyl-3-(all-trans-polyprenyl)benzene-1,4-diol + S-adenosyl-L-homocysteine + H(+). It participates in quinol/quinone metabolism; menaquinone biosynthesis; menaquinol from 1,4-dihydroxy-2-naphthoate: step 2/2. Its pathway is cofactor biosynthesis; ubiquinone biosynthesis. Methyltransferase required for the conversion of demethylmenaquinol (DMKH2) to menaquinol (MKH2) and the conversion of 2-polyprenyl-6-methoxy-1,4-benzoquinol (DDMQH2) to 2-polyprenyl-3-methyl-6-methoxy-1,4-benzoquinol (DMQH2). The sequence is that of Ubiquinone/menaquinone biosynthesis C-methyltransferase UbiE from Idiomarina loihiensis (strain ATCC BAA-735 / DSM 15497 / L2-TR).